Here is a 533-residue protein sequence, read N- to C-terminus: Protein disulfide isomerase-like 1-5 (533 aa).

An N-terminal signal peptide occupies residues 1–22 (MRARRVVAAAAVLLLFAVVAVA). Thioredoxin domains are found at residues 51–196 (LGGG…KDQT) and 387–516 (LLEG…EKLQ). Residue Cys-97 is the Nucleophile of the active site. The N-linked (GlcNAc...) asparagine glycan is linked to Asn-151. Active-site nucleophile residues include Cys-436 and Cys-439. A disulfide bond links Cys-436 and Cys-439. Positions 530–533 (KDEL) match the Prevents secretion from ER motif.

It belongs to the protein disulfide isomerase family.

It localises to the endoplasmic reticulum lumen. The catalysed reaction is Catalyzes the rearrangement of -S-S- bonds in proteins.. Acts as a protein-folding catalyst that interacts with nascent polypeptides to catalyze the formation, isomerization, and reduction or oxidation of disulfide bonds. May play a role in storage protein biogenesis. This is Protein disulfide isomerase-like 1-5 (PDIL1-5) from Oryza sativa subsp. japonica (Rice).